Here is a 410-residue protein sequence, read N- to C-terminus: Peptidase T-like protein YPO1009/y3403/YP_3421 (410 aa).

His82 is a Zn(2+) binding site. The active site involves Asp84. Zn(2+) is bound at residue Asp144. Residue Glu176 is the Proton acceptor of the active site. The Zn(2+) site is built by Glu177, Asp200, and His382.

Belongs to the peptidase M20B family. Zn(2+) serves as cofactor.

The sequence is that of Peptidase T-like protein YPO1009/y3403/YP_3421 from Yersinia pestis.